Reading from the N-terminus, the 95-residue chain is Opiscorpine-2 (95 aa).

A signal peptide spans 1-19 (MNNKLTALIFHGLLAIASC). In terms of domain architecture, BetaSPN-type CS-alpha/beta spans 55 to 95 (EFMCMANMDPTGSCETHCQKASGEKGYCHGTKCKCGVPLSY). Disulfide bonds link cysteine 58–cysteine 82, cysteine 68–cysteine 87, and cysteine 72–cysteine 89.

It belongs to the long chain scorpion toxin family. Class 3 subfamily. In terms of tissue distribution, expressed by the venom gland.

The protein localises to the secreted. Its function is as follows. Has antimicrobial activity against yeasts and bacteria. This Opistophthalmus carinatus (African yellow leg scorpion) protein is Opiscorpine-2.